A 685-amino-acid polypeptide reads, in one-letter code: Stromal interaction molecule 1 (685 aa).

A signal peptide spans 1 to 22 (MDVCARLALWLLWGLLLHQGQS). Residues 23 to 213 (LSHSHSEKNT…LLTRHNHLKD (191 aa)) lie on the Extracellular side of the membrane. Residues 24–43 (SHSHSEKNTGASSGATSEES) form a disordered region. Residues 32-41 (TGASSGATSE) are compositionally biased toward low complexity. 2 EF-hand domains span residues 64 to 97 (SFEA…EDLN) and 102 to 126 (TVKH…AWKS). D76, D78, N80, D82, and E87 together coordinate Ca(2+). 2 N-linked (GlcNAc...) asparagine glycosylation sites follow: N131 and N171. The SAM domain occupies 132-200 (WTVDEVIQWL…QLKALDTVLF (69 aa)). The chain crosses the membrane as a helical span at residues 214-234 (FMLVVSIVIGVGGCWFAYIQN). Residues 235–685 (RYSKEHMKKM…LKIFKKPLKK (451 aa)) are Cytoplasmic-facing. Residues 248–442 (LEGLHRAEQS…IEILCGFQIV (195 aa)) are a coiled coil. Residue S257 is modified to Phosphoserine. The SOAR/CAD stretch occupies residues 344–442 (PEALQKWLQL…IEILCGFQIV (99 aa)). A contributes to fast Ca(2+)-dependent inactivation of CRAC channels region spans residues 475-483 (DDVDDMDEE). Positions 490–499 (MQSPSLQSSV) are enriched in low complexity. The segment at 490-541 (MQSPSLQSSVRQRLTEPQLGLGSQRDLTHSDSESSLHMSDRQRVAPKPPQMG) is disordered. Phosphothreonine is present on T504. Position 512 is a phosphoserine (S512). The span at 515–532 (DLTHSDSESSLHMSDRQR) shows a compositional bias: basic and acidic residues. At T517 the chain carries Phosphothreonine. A phosphoserine mark is found at S519, S521, S523, S524, S567, S575, S602, S608, S618, S621, and S628. The disordered stretch occupies residues 596–685 (LMELNPSVPP…LKIFKKPLKK (90 aa)). Low complexity predominate over residues 608–620 (SPLLDSSHSLSPS). Residues 642–645 (TRIP) carry the Microtubule tip localization signal motif. The span at 655 to 666 (EEDNGSIGEETD) shows a compositional bias: acidic residues. S660 is subject to Phosphoserine. At T665 the chain carries Phosphothreonine. Phosphoserine is present on S668. Positions 670 to 685 (GRKKFPLKIFKKPLKK) are enriched in basic residues. Residues 672-685 (KKFPLKIFKKPLKK) are required for generation of inwardly rectifying CRAC currents.

In terms of assembly, monomer in the presence of Ca(2+). It oligomerizes in absence of Ca(2+). Forms homooligomers and heterooligomers with STIM2. Interacts with pore-forming subunits of CRAC channels, ORAI1, ORAI2 and ORAI3; this interaction is potentiated upon Ca(2+) store depletion. Interacts (via the transmembrane region and the SOAR/CAD domain) with SPPL3; the interaction promotes the binding of STIM1 to ORAI1. Interacts with ORAI1. Interacts with MAPRE1; probably required for targeting to the growing microtubule plus ends. Interacts with CRACR2A/EFCAB4B; the interaction is direct and takes place in absence of Ca(2+). Forms a complex with CRACR2A/EFCAB4B and ORAI1 at low concentration of Ca(2+), the complex dissociates at elevated Ca(2+) concentrations. Interacts with SARAF, promoting a slow inactivation of STIM1-dependent SOCE activity, possibly by facilitating the deoligomerization of STIM1. Interacts with EFHB; the interaction takes place upon Ca(2+)-store depletion and inhibits the association with SARAF. Interacts with ASPH. Interacts with SLC35G1; intracellular Ca(2+)-dependent. May interact with ATP1A1, ATP2A2, ATP2B1, ATP2B4, KPNB1 and XPO1; through SLC35G1. Interacts with STIMATE, promoting STIM1 conformational switch. Interacts with TMEM178A. Interacts with CASQ1 (via C-terminal end and preferentially with the monomeric form); this interaction increases in response to a depletion of intracellular Ca(2+), decreases both STIM1 aggregation and clustering, interaction of STIM1 with ORAI1 and store-operated Ca(2+) entry (SOCE) activity. Interacts with ADCY8. Interacts with TMEM203. Glycosylation is required for cell surface expression. Post-translationally, phosphorylated predominantly on Ser residues. As to expression, expressed in maturation-stage ameloblasts (at protein level). Expressed in all tissues examined and in many cell types, including bone marrow stroma, fibroblast, B-cell precursors, lymphoma and erythroleukemia.

The protein localises to the cell membrane. It is found in the endoplasmic reticulum membrane. It localises to the sarcoplasmic reticulum. Its subcellular location is the cytoplasm. The protein resides in the cytoskeleton. Its function is as follows. Acts as a Ca(2+) sensor that gates two major inward rectifying Ca(2+) channels at the plasma membrane: Ca(2+) release-activated Ca(2+) (CRAC) channels and arachidonate-regulated Ca(2+)-selective (ARC) channels. Plays a role in mediating store-operated Ca(2+) entry (SOCE), a Ca(2+) influx following depletion of intracellular Ca(2+) stores. Upon Ca(2+) depletion, translocates from the endoplasmic reticulum to the plasma membrane where it activates CRAC channel pore-forming subunits ORA1, ORA2 and ORAI3 to generate sustained and oscillatory Ca(2+) entry. Involved in enamel formation. The protein is Stromal interaction molecule 1 (Stim1) of Mus musculus (Mouse).